Consider the following 449-residue polypeptide: Phosphoglucosamine mutase (449 aa).

Serine 102 serves as the catalytic Phosphoserine intermediate. The Mg(2+) site is built by serine 102, aspartate 243, aspartate 245, and aspartate 247. Serine 102 is subject to Phosphoserine.

It belongs to the phosphohexose mutase family. Mg(2+) is required as a cofactor. In terms of processing, activated by phosphorylation.

The enzyme catalyses alpha-D-glucosamine 1-phosphate = D-glucosamine 6-phosphate. Catalyzes the conversion of glucosamine-6-phosphate to glucosamine-1-phosphate. The chain is Phosphoglucosamine mutase from Maricaulis maris (strain MCS10) (Caulobacter maris).